The sequence spans 368 residues: Phospho-N-acetylmuramoyl-pentapeptide-transferase (368 aa).

10 helical membrane-spanning segments follow: residues 32 to 52 (TGGA…WIID), 79 to 99 (TPTM…VLWA), 102 to 122 (LNPY…IGFY), 140 to 160 (TRLL…IRLG), 176 to 196 (VVVD…VGAG), 207 to 227 (GLAI…AYLA), 247 to 267 (LAVL…FNAP), 271 to 291 (IFMG…IAVA), 296 to 316 (IVLA…IVQV), and 345 to 365 (QIVI…LSTL).

The protein belongs to the glycosyltransferase 4 family. MraY subfamily. The cofactor is Mg(2+).

The protein resides in the cell inner membrane. The enzyme catalyses UDP-N-acetyl-alpha-D-muramoyl-L-alanyl-gamma-D-glutamyl-meso-2,6-diaminopimeloyl-D-alanyl-D-alanine + di-trans,octa-cis-undecaprenyl phosphate = di-trans,octa-cis-undecaprenyl diphospho-N-acetyl-alpha-D-muramoyl-L-alanyl-D-glutamyl-meso-2,6-diaminopimeloyl-D-alanyl-D-alanine + UMP. The protein operates within cell wall biogenesis; peptidoglycan biosynthesis. Catalyzes the initial step of the lipid cycle reactions in the biosynthesis of the cell wall peptidoglycan: transfers peptidoglycan precursor phospho-MurNAc-pentapeptide from UDP-MurNAc-pentapeptide onto the lipid carrier undecaprenyl phosphate, yielding undecaprenyl-pyrophosphoryl-MurNAc-pentapeptide, known as lipid I. In Nitrobacter hamburgensis (strain DSM 10229 / NCIMB 13809 / X14), this protein is Phospho-N-acetylmuramoyl-pentapeptide-transferase.